Reading from the N-terminus, the 138-residue chain is Basic phospholipase A2 chain HDP-2P (138 aa).

An N-terminal signal peptide occupies residues 1-16; it reads MRILWIVAVCLIGVEG. 7 cysteine pairs are disulfide-bonded: cysteine 42/cysteine 131, cysteine 44/cysteine 60, cysteine 59/cysteine 111, cysteine 65/cysteine 138, cysteine 66/cysteine 104, cysteine 73/cysteine 97, and cysteine 91/cysteine 102. Tyrosine 43, glycine 45, and glycine 47 together coordinate Ca(2+). Residue histidine 63 is part of the active site. Residue aspartate 64 participates in Ca(2+) binding. Aspartate 105 is an active-site residue.

Heterodimer of an acidic and a basic chain; non-covalently linked. The toxic basic protein has phospholipase A2 activity (chain HDP-2P) and the non-toxic acidic protein functions as its inhibitor (chain HPD-1I (AC A4VBF0)). Requires Ca(2+) as cofactor. In terms of tissue distribution, expressed by the venom gland.

The protein resides in the secreted. The catalysed reaction is a 1,2-diacyl-sn-glycero-3-phosphocholine + H2O = a 1-acyl-sn-glycero-3-phosphocholine + a fatty acid + H(+). Enzymatic activity and neurotoxicity are inhibited by Triton X-100. Triton X-100 has been determined to be located in the center of the hydrophobic channel of the enzyme. In terms of biological role, monomer: snake venom phospholipase A2 (PLA2) that affects neuromuscular transmission presynaptically. It has catalytic activity, anticoagulant activity and weakly inhibits ADP-induced platelet aggregation. PLA2 catalyzes the calcium-dependent hydrolysis of the 2-acyl groups in 3-sn-phosphoglycerides. Functionally, heterodimer: shows the same activities as the monomer, but with a lower potency. This Vipera nikolskii (Nikolsky's adder) protein is Basic phospholipase A2 chain HDP-2P.